The following is a 469-amino-acid chain: SWI/SNF complex subunit SWI3B (469 aa).

Residues 1–42 (MAMKAPDPGGSGEILPSTPSLSETTSGGAAAASKSAQLPSSS) form a disordered region. Residues 15 to 42 (LPSTPSLSETTSGGAAAASKSAQLPSSS) show a composition bias toward low complexity. Residues 48–145 (IHVPSYSSWF…YNSSASAKPL (98 aa)) enclose the SWIRM domain. Residues 223–274 (ESKPEWSDKEILLLLEAVMHYGDDWKKVASHVIGRTEKDCVSQFVKLPFGEQ) form the SANT domain. Basic and acidic residues-rich tracts occupy residues 293–306 (DSDIPESEGIDKDG) and 360–369 (DKNASRDPNR). Disordered regions lie at residues 293 to 314 (DSDIPESEGIDKDGSSPNKRIK) and 360 to 387 (DKNASRDPNRQDANAASSGETTRNESER). Over residues 370 to 380 (QDANAASSGET) the composition is skewed to polar residues. Residues 423–447 (VHFEKLDLEMERSRKQLEEVRNLLF) are a coiled coil.

Homodimers and heterodimers. Interacts with SWI3A, SWI3C, SWI3D, BSH, BRM and FCA (via C-terminus), and (via N-terminus) with HAB1. Interacts with MORC6 and SUVH9. In terms of tissue distribution, expressed in roots, stems, leaves, flowers and siliques.

The protein resides in the nucleus. Its function is as follows. Component of a multiprotein complex equivalent of the SWI/SNF complex, an ATP-dependent chromatin-remodeling complex, which is required for the positive and negative regulation of gene expression of a large number of genes. It changes chromatin structure by altering DNA-histone contacts within a nucleosome, leading eventually to a change in nucleosome position, thus facilitating or repressing binding of gene-specific transcription factors. May play an essential role in the transition from the vegetative to the reproductive phase of development. May be a positive regulator of ABA signaling. The sequence is that of SWI/SNF complex subunit SWI3B (SWI3B) from Arabidopsis thaliana (Mouse-ear cress).